The chain runs to 568 residues: Cytochrome P450 monooxygenase 41 (568 aa).

Residues 21–41 (LTSLVPLILSVMVCLIATVTI) form a helical membrane-spanning segment. N-linked (GlcNAc...) asparagine glycans are attached at residues Asn321 and Asn377. Position 514 (Cys514) interacts with heme.

Belongs to the cytochrome P450 family. The cofactor is heme.

The protein localises to the membrane. The protein operates within secondary metabolite biosynthesis. In terms of biological role, cytochrome P450 monooxygenase that is able to use 3,5-dimethoxy-trans-stilbene and 3,5,4'-trimethoxy-trans-stilbene as substrates for oxidation. The protein is Cytochrome P450 monooxygenase 41 of Postia placenta (strain ATCC 44394 / Madison 698-R) (Brown rot fungus).